Here is a 907-residue protein sequence, read N- to C-terminus: Chloride channel protein 2 (907 aa).

At 1–93 (MAAATAAAAT…RCHKFLVSRV (93 aa)) the chain is on the cytoplasmic side. Residues 22 to 40 (QYEQTLMYGRYTQELGAFA) form an essential for channel gating by both voltage and cell volume region. The residue at position 26 (threonine 26) is a Phosphothreonine. A modulates channel gating by both voltage and cell volume region spans residues 42 to 55 (EEAARIRLGGPEPW). Transmembrane regions (helical) follow at residues 94 to 127 (GEDWIFLVLLGLLMALVSWAMDYAIAVCLQAQQW) and 136 to 161 (ILLQYLAWVTYPVVLITFSAGFTQIL). The short motif at 167-171 (GSGIP) is the Selectivity filter part_1 element. The helical intramembrane region spans 170–177 (IPEMKTIL). The next 2 helical transmembrane spans lie at 186 to 204 (LTLKTFVAKVIGLTCALGS) and 211 to 229 (EGPFVHIASMCAALLSKFL). Positions 209–213 (GKEGP) match the Selectivity filter part_2 motif. 2 consecutive intramembrane regions (helical) follow at residues 245-257 (MLAAACAVGVGCC) and 261-269 (PIGGVLFSI). The next 5 helical transmembrane spans lie at 281–301 (YWRGFFAATFSAFIFRVLAVW), 327–355 (LPAFAVIGIASGFGGALFVYLNRKIVQVM), 364–383 (FLMKKRLLFPALVTLLISTL), 435–455 (ANVFLTLVIFILMKFWMSALA), and 463–486 (GAFMPVFVIGAAFGRLVGESMAAW). Positions 463 to 467 (GAFMP) match the Selectivity filter part_3 motif. Residues 503–517 (GGYAVVGAAALAGAV) constitute an intramembrane region (helical). The segment at residues 518–519 (TH) is an intramembrane region (note=Loop between two helices). Positions 520-531 (TVSTAVIVFELT) form an intramembrane region, helical. The segment at residues 532-536 (GQIAH) is an intramembrane region (note=Loop between two helices). A helical membrane pass occupies residues 537–554 (ILPVMIAVILANAVAQSL). The Cytoplasmic segment spans residues 555–907 (QPSLYDSIIR…TPSDSDDKCQ (353 aa)). In terms of domain architecture, CBS 1 spans 590–648 (MVRDVPHVALSCTFRDLRLALHRTKGRMLALVESPESMILLGSIERSQVVALLGAQLSP). Positions 650–660 (RRRQHMQKLRK) are enriched in basic residues. Residues 650 to 720 (RRRQHMQKLR…NATSLQEGTT (71 aa)) form a disordered region. Over residues 664–678 (SPPSDQESPPSSETS) the composition is skewed to low complexity. Basic residues predominate over residues 696–705 (QTHKPLKPAL). The segment covering 710–720 (SNATSLQEGTT) has biased composition (polar residues). A Phosphoserine modification is found at serine 767. Positions 799–859 (IDPAPFQLVE…GSVTAQGVKV (61 aa)) constitute a CBS 2 domain. The Basolateral membrane sorting motif lies at 821 to 822 (LL). A disordered region spans residues 865–907 (SFRDSATSSSDTETTEVHALWGPRSRHGLPREGTPSDSDDKCQ).

It belongs to the chloride channel (TC 2.A.49) family. ClC-2/CLCN2 subfamily. In terms of assembly, homodimer. Interacts with auxiliary subunit HEPACAM. In terms of processing, phosphorylated. Activated by dephosphorylation. Ubiquitously expressed. Expressed in neurons and glial cells (at protein level).

The protein localises to the cell membrane. The protein resides in the basolateral cell membrane. It is found in the cell projection. It localises to the dendritic spine membrane. Its subcellular location is the axon. It catalyses the reaction chloride(in) = chloride(out). The catalysed reaction is thiocyanate(in) = thiocyanate(out). The enzyme catalyses bromide(in) = bromide(out). It carries out the reaction nitrate(in) = nitrate(out). It catalyses the reaction iodide(out) = iodide(in). Its activity is regulated as follows. Common gate kinetics are down-regulated by intracellular ATP. Inhibited by AK-42, a derivative of meclofenamate. Inhibited by Cd(2+). Inhibited by Zn(2+) and PKC activation. Inhibited at acidic pH. CCLN2:HEPACAM channel conductance is up-regulated upon hypo-osmolarity. In terms of biological role, voltage-gated and osmosensitive chloride channel. Forms a homodimeric channel where each subunit has its own ion conduction pathway. Conducts double-barreled currents controlled by two types of gates, two fast glutamate gates that control each subunit independently and a slow common gate that opens and shuts off both subunits simultaneously. Displays inward rectification currents activated upon membrane hyperpolarization and extracellular hypotonicity. Contributes to chloride conductance involved in neuron excitability. In hippocampal neurons, generates a significant part of resting membrane conductance and provides an additional chloride efflux pathway to prevent chloride accumulation in dendrites upon GABA receptor activation. In glia, associates with the auxiliary subunit HEPACAM/GlialCAM at astrocytic processes and myelinated fiber tracts where it may regulate transcellular chloride flux buffering extracellular chloride and potassium concentrations. Regulates aldosterone production in adrenal glands. The opening of CLCN2 channels at hyperpolarized membrane potentials in the glomerulosa causes cell membrane depolarization, activation of voltage-gated calcium channels and increased expression of aldosterone synthase, the rate-limiting enzyme for aldosterone biosynthesis. Contributes to chloride conductance in retinal pigment epithelium involved in phagocytosis of shed photoreceptor outer segments and photoreceptor renewal. Conducts chloride currents at the basolateral membrane of epithelial cells with a role in chloride reabsorption rather than secretion. Permeable to small monovalent anions with chloride &gt; thiocyanate &gt; bromide &gt; nitrate &gt; iodide ion selectivity. This chain is Chloride channel protein 2 (Clcn2), found in Rattus norvegicus (Rat).